The primary structure comprises 693 residues: Polyribonucleotide nucleotidyltransferase (693 aa).

Mg(2+) contacts are provided by aspartate 485 and aspartate 491. Residues 552–611 enclose the KH domain; it reads PRIMVLEINPSKIGDLIGPSGKNIKKIIEETHTTINIKPEGLVYISAPDQESAEKAAQMV. The region spanning 621–691 is the S1 motif domain; sequence GDIFLGKVIR…SSGRISLTRK (71 aa).

Belongs to the polyribonucleotide nucleotidyltransferase family. The cofactor is Mg(2+).

Its subcellular location is the cytoplasm. The catalysed reaction is RNA(n+1) + phosphate = RNA(n) + a ribonucleoside 5'-diphosphate. Involved in mRNA degradation. Catalyzes the phosphorolysis of single-stranded polyribonucleotides processively in the 3'- to 5'-direction. The sequence is that of Polyribonucleotide nucleotidyltransferase from Dictyoglomus thermophilum (strain ATCC 35947 / DSM 3960 / H-6-12).